The sequence spans 474 residues: Pyruvate kinase (474 aa).

Arginine 32 lines the substrate pocket. Asparagine 34, serine 36, and aspartate 66 together coordinate K(+). ATP is bound at residue 34 to 37 (NFSH). Positions 73 and 155 each coordinate ATP. Glutamate 221 contacts Mg(2+). Substrate is bound by residues glycine 244, aspartate 245, and threonine 277. Aspartate 245 contacts Mg(2+).

Belongs to the pyruvate kinase family. In terms of assembly, homotetramer. The cofactor is Mg(2+). Requires K(+) as cofactor.

The catalysed reaction is pyruvate + ATP = phosphoenolpyruvate + ADP + H(+). It functions in the pathway carbohydrate degradation; glycolysis; pyruvate from D-glyceraldehyde 3-phosphate: step 5/5. The chain is Pyruvate kinase (pykF) from Clostridium perfringens (strain 13 / Type A).